The chain runs to 276 residues: Large ribosomal subunit protein uL2 (276 aa).

Disordered regions lie at residues 26-45 (RSTP…GRNC) and 224-276 (AMNP…RGQK). The segment covering 259–276 (RDKKKASSKLIIKRRGQK) has biased composition (basic residues).

The protein belongs to the universal ribosomal protein uL2 family. As to quaternary structure, part of the 50S ribosomal subunit. Forms a bridge to the 30S subunit in the 70S ribosome.

One of the primary rRNA binding proteins. Required for association of the 30S and 50S subunits to form the 70S ribosome, for tRNA binding and peptide bond formation. It has been suggested to have peptidyltransferase activity; this is somewhat controversial. Makes several contacts with the 16S rRNA in the 70S ribosome. The polypeptide is Large ribosomal subunit protein uL2 (Oleidesulfovibrio alaskensis (strain ATCC BAA-1058 / DSM 17464 / G20) (Desulfovibrio alaskensis)).